Consider the following 422-residue polypeptide: MTELSSFKAPKGVPDYLPPASAEFVAVRNGLLAAARRAGYGDIELPIFEDTALFARGVGESTDVVSKEMYTFADRGDRSVTLRPEGTAGVMRAVIEHGLDRGQLPVKLCYSGPFFRYERPQAGRYRQLQQVGVEAIGVDDPALDAEVIAVADAGFRSLGLDGFRLDITSLGDDSCRPQYRELLQEFLFKLDLDEETRRRAEINPLRVLDDKRPHMKEMTADAPVMLDHLSDAAKQHFDTVLAHLDALSVPYVINPRMVRGLDYYTKTTFEFVHDGLGAQSGIGGGGRYDGLMHQLGGRDLSGIGFGLGVDRTLLALRAEGKTAGETARVDVYAVPLGGDAKVRLAVLAAQLRAAGVRVDVAYGDRSLKGAMKGADRSGASIALVAGDRDLEAGTVGMKSMATGEQVDVAVEGVVAEVLSRLS.

It belongs to the class-II aminoacyl-tRNA synthetase family. As to quaternary structure, homodimer.

It is found in the cytoplasm. The enzyme catalyses tRNA(His) + L-histidine + ATP = L-histidyl-tRNA(His) + AMP + diphosphate + H(+). This chain is Histidine--tRNA ligase, found in Mycolicibacterium vanbaalenii (strain DSM 7251 / JCM 13017 / BCRC 16820 / KCTC 9966 / NRRL B-24157 / PYR-1) (Mycobacterium vanbaalenii).